The sequence spans 362 residues: Beta-ketoacyl-[acyl-carrier-protein] synthase III 2 (362 aa).

Catalysis depends on residues cysteine 113 and histidine 251. An ACP-binding region spans residues 252–256; sequence QANIR. Asparagine 281 is an active-site residue.

Belongs to the thiolase-like superfamily. FabH family. As to quaternary structure, homodimer.

It localises to the cytoplasm. It carries out the reaction malonyl-[ACP] + acetyl-CoA + H(+) = 3-oxobutanoyl-[ACP] + CO2 + CoA. Its pathway is lipid metabolism; fatty acid biosynthesis. Functionally, catalyzes the condensation reaction of fatty acid synthesis by the addition to an acyl acceptor of two carbons from malonyl-ACP. Catalyzes the first condensation reaction which initiates fatty acid synthesis and may therefore play a role in governing the total rate of fatty acid production. Possesses both acetoacetyl-ACP synthase and acetyl transacylase activities. Its substrate specificity determines the biosynthesis of branched-chain and/or straight-chain of fatty acids. In Vibrio vulnificus (strain YJ016), this protein is Beta-ketoacyl-[acyl-carrier-protein] synthase III 2.